A 73-amino-acid chain; its full sequence is MFTMKKSLLLVFFLGTIALSLCEEERGADDDNGGEITDEEIKRGILTDTLKGAAKNVAGVLLDKLKCKITGGC.

An N-terminal signal peptide occupies residues 1-22 (MFTMKKSLLLVFFLGTIALSLC). A propeptide spanning residues 23 to 41 (EEERGADDDNGGEITDEEI) is cleaved from the precursor. A disulfide bond links Cys-67 and Cys-73.

As to expression, expressed by the skin glands.

It localises to the secreted. Functionally, antimicrobial peptide. This chain is Pelophylaxin-1, found in Pelophylax fukienensis (Fukien gold-striped pond frog).